The primary structure comprises 332 residues: FAD-dependent monooxygenase elcE (332 aa).

The protein belongs to the oxygen-dependent FAD-linked oxidoreductase family.

It functions in the pathway secondary metabolite biosynthesis. Functionally, FAD-dependent monooxygenase; part of the gene cluster that mediates the biosynthesis of elsinochrome C, a perelyenequinone phytotoxin structurally similar to cercosporin. The first step of elsinochrome C biosynthesis is performed by the polyketide synthase elcA which catalyzes the formation of nor-toralactone. The starter unit acyltransferase (SAT) domain of elcA initiates polyketide extension by the selective utilization of acetyl-CoA, which is elongated to the heptaketide in the beta-ketoacyl synthase (KS) domain by successive condensations with six malonyl units introduced by the malonyl acyltransferase (MAT) domain. The product template (PT) domain catalyzes C4-C9 and C2-C11 aldol cyclizations and dehydrations to a trihydroxynaphthalene, which is thought to be delivered to the thioesterase (TE) domain for product release. The bifunctional enzyme elcB then methylates nor-toralactone to toralactone before conducting an unusual oxidative aromatic ring opening. The next step in perylenequinone biosynthesis is an O-methylation at the nascent OH-6 of the elcB product performed by the O-methyltransferase elcD. The oxidative coupling of the two monomeric naphthol units in perylenequinone biosynthesis is catalyzed by the FAD-dependent monooxygenase elcE and the multicopper oxidase elcG. ElcG might catalyze the first intermolecular coupling in a regio- and stereo-selective manner via a phenol radical coupling mechanism and the elcE could forge the second C-C bond intramolecularly via a hydride transfer mechanism. The fasciclin domain-containing protein elcF might also play a role duting this step. The last piece of the puzzle in the biosynthesis of elsinochrome C is the additional annulation by enolate coupling to afford the dihydrobenzo(ghi)perylenequinone system, catalyzed by the FAD-dependent monooxygenase elcH. The polypeptide is FAD-dependent monooxygenase elcE (Phaeosphaeria nodorum (strain SN15 / ATCC MYA-4574 / FGSC 10173) (Glume blotch fungus)).